The sequence spans 1342 residues: MVYSYTEKKRIRKDFGKRPQVLNVPYLLTIQLDSFDKFIQRDPEGQQGLEAAFRSVFPIVSNNGNTELQYVSYQLGEPVFDVRECQIRGTTYAAPLRVKLRLVSYDKDAAPGTIKDIKEQEVYMGEIPLMTDNGTFVINGTERVIVSQLHRSPGVFFDSDKGKTHSSGKVLYNARIIPYRGSWLDFEFDPKDNLYARIDRRRKLPATIILRALNYTTEQILDIFFDKVVFEISNNKLLMTLVPERLRGETATFDIEANGKVYVERGRRITARHIRALEKDQITQVEVPTEYIVGKVAAKDYVDLESGEIVCPANMEISLEMLAKLAQAGYKTIETLFTNDLDYGPYISETLRVDPSNDRLSALVEIYRMMRPGEPPTKEAAEGLFDNLFFSSDRYDLSAVGRMKFNRSLGIDEETGSGILSNDDIIGVMKKLIEIRNGRGEVDDIDHLGNRRIRSVGEMAENQFRIGLVRVERAVKERLSLGDLDAVTPQDLINAKPISAAVKEFFGSSQLSQFMDQNNPLSEVTHKRRISALGPGGLTRERAGFEVRDVHATHYGRVCPIETPEGPNIGLINSLSVYARTNDYGFLETPYRKVVNGQVTEEIEYLSAIEEGKYVIAQANSNLDEELRFTDAFVTCRGEHGESGLYRPDEIHYMDVSTQQVVSVAAALIPFLEHDDANRALMGANMQRQAVPTLRADKPLVGTGIEKAVAVDSGVTVIAKRGGMVQYVDASRIVVKVNEDETIPGEAGIDIYNLVKYTRSNQNTCINQIPCVSLGEPIGRGEVLADGPSTDLGELALGQNMRVAFMPWNGYNFEDSMLVSERVVQEDRFTTIHIQELSCVARDTKLGSEEITADIPNVGEAALSKLDESGIVYIGAEVKGGDILVGKVTPKGETQLTPEEKLLRAIFGEKASDVKDSSLRVPNSVSGTVIDVQVFTRDGVEKDKRALEIEEMQLKQAKKDLVEELEILEAGLFTRVRSLLIAGGFDAKNLDKLDRTKWLEQSLSDEAQQNQLEQLAEQYEELRKEFERKLEVQRGKIIQGDDLAPGVLKVVKVYLAVKRQIQPGDKMAGRHGNKGVISKINPVEDMPYDENGQPVDIVLNPLGVPSRMNIGQILETHLGLAAKGIGDKINAMIKQQQDVAKLREYMQKAYDLGHGSQKVDLSTFSDEEVMRLAQNLRKGLPLATPVFDGAHESEIKGLLELGGLPTSGQITLFDGRTGEKFERPVTVGYMYMLKLNHLVDDKMHARSTGSYSLVTQQPLGGKAQFGGQRFGEMEVWALEAYGAAYTLQEMLTVKSDDVNGRTKMYKNIVGGTHQMDPGTPESFNVIMKEIRSLGINIDLDED.

The protein belongs to the RNA polymerase beta chain family. The RNAP catalytic core consists of 2 alpha, 1 beta, 1 beta' and 1 omega subunit. When a sigma factor is associated with the core the holoenzyme is formed, which can initiate transcription.

The enzyme catalyses RNA(n) + a ribonucleoside 5'-triphosphate = RNA(n+1) + diphosphate. Its function is as follows. DNA-dependent RNA polymerase catalyzes the transcription of DNA into RNA using the four ribonucleoside triphosphates as substrates. The chain is DNA-directed RNA polymerase subunit beta from Pasteurella multocida (strain Pm70).